The chain runs to 234 residues: Peptidyl-prolyl cis-trans isomerase, rhodopsin-specific isozyme (234 aa).

The N-terminal stretch at 1–19 (MNILKILILLELIYTCVSG) is a signal peptide. The region spanning 29-187 (YMDVKHQKKP…DPVIIVNCGE (159 aa)) is the PPIase cyclophilin-type domain. N-linked (GlcNAc...) asparagine glycosylation occurs at asparagine 67. Residues 202-222 (ILGWIKAAGLPFCSSFIVLMI) traverse the membrane as a helical segment.

Belongs to the cyclophilin-type PPIase family. Expressed specifically in photoreceptor cells.

The protein resides in the membrane. It carries out the reaction [protein]-peptidylproline (omega=180) = [protein]-peptidylproline (omega=0). In terms of biological role, PPIases accelerate the folding of proteins. It catalyzes the cis-trans isomerization of proline imidic peptide bonds in oligopeptides. Acts on the folding of rhodopsin RH1 and RH2 (but not RH3) and is required for visual transduction. In Calliphora vicina (Blue blowfly), this protein is Peptidyl-prolyl cis-trans isomerase, rhodopsin-specific isozyme (NINAA).